The chain runs to 343 residues: Methionine import ATP-binding protein MetN (343 aa).

In terms of domain architecture, ABC transporter spans 2 to 241 (IKLSNITKVF…PKTPLAQKFI (240 aa)). 38–45 (GASGAGKS) provides a ligand contact to ATP.

It belongs to the ABC transporter superfamily. Methionine importer (TC 3.A.1.24) family. The complex is composed of two ATP-binding proteins (MetN), two transmembrane proteins (MetI) and a solute-binding protein (MetQ).

Its subcellular location is the cell inner membrane. The enzyme catalyses L-methionine(out) + ATP + H2O = L-methionine(in) + ADP + phosphate + H(+). It catalyses the reaction D-methionine(out) + ATP + H2O = D-methionine(in) + ADP + phosphate + H(+). Its function is as follows. Part of the ABC transporter complex MetNIQ involved in methionine import. Responsible for energy coupling to the transport system. The polypeptide is Methionine import ATP-binding protein MetN (Shigella boydii serotype 4 (strain Sb227)).